The chain runs to 604 residues: Serine protease 56 (604 aa).

The N-terminal stretch at 1-22 (MPLAMLLLLLLLLSPDSQTAHG) is a signal peptide. The disordered stretch occupies residues 70 to 94 (CQGPGRPRPQAPLLQDPPEPVQCGE). Pro residues predominate over residues 75–89 (RPRPQAPLLQDPPEP). A glycan (N-linked (GlcNAc...) asparagine) is linked at Asn101. Positions 109 to 341 (IVGGSTAPSG…FKDWLQEQMS (233 aa)) constitute a Peptidase S1 domain. Cys134 and Cys150 are disulfide-bonded. Active-site charge relay system residues include His149 and Asp195. 3 disulfide bridges follow: Cys229-Cys296, Cys260-Cys275, and Cys286-Cys317. Ser290 functions as the Charge relay system in the catalytic mechanism. Disordered stretches follow at residues 424 to 452 (RPGLRRGVSAPARSAPSLQELPGHNPREQ) and 578 to 604 (PQAPWIGADQGQRLGKERQGQLQPPVP).

Belongs to the peptidase S1 family. In terms of tissue distribution, expressed in the eye: present in the retina and in the optic nerve.

The protein resides in the endoplasmic reticulum membrane. Its function is as follows. Serine protease required during eye development. This is Serine protease 56 (Prss56) from Mus musculus (Mouse).